A 163-amino-acid chain; its full sequence is Protein-export protein SecB (163 aa).

The protein belongs to the SecB family. As to quaternary structure, homotetramer, a dimer of dimers. One homotetramer interacts with 1 SecA dimer.

Its subcellular location is the cytoplasm. Functionally, one of the proteins required for the normal export of preproteins out of the cell cytoplasm. It is a molecular chaperone that binds to a subset of precursor proteins, maintaining them in a translocation-competent state. It also specifically binds to its receptor SecA. The protein is Protein-export protein SecB of Brucella abortus (strain S19).